Here is a 260-residue protein sequence, read N- to C-terminus: NAD-capped RNA hydrolase NudC (260 aa).

Substrate is bound by residues K25 and R69. Zn(2+)-binding residues include C98 and C101. E111 contacts substrate. Zn(2+) contacts are provided by C116 and C119. A substrate-binding site is contributed by Y124. The region spanning 125–248 (PQIAPCVIVA…TVARRLIEDT (124 aa)) is the Nudix hydrolase domain. A divalent metal cation is bound by residues A158, E174, and E178. Residues 159–180 (GFVEVGETLEQAVSREVLEESN) carry the Nudix box motif. 192-199 (QPWPFPHS) serves as a coordination point for substrate. Position 219 (E219) interacts with a divalent metal cation. Position 241 (A241) interacts with substrate.

Belongs to the Nudix hydrolase family. NudC subfamily. As to quaternary structure, homodimer. It depends on Mg(2+) as a cofactor. Requires Mn(2+) as cofactor. The cofactor is Zn(2+).

The catalysed reaction is a 5'-end NAD(+)-phospho-ribonucleoside in mRNA + H2O = a 5'-end phospho-adenosine-phospho-ribonucleoside in mRNA + beta-nicotinamide D-ribonucleotide + 2 H(+). It catalyses the reaction NAD(+) + H2O = beta-nicotinamide D-ribonucleotide + AMP + 2 H(+). The enzyme catalyses NADH + H2O = reduced beta-nicotinamide D-ribonucleotide + AMP + 2 H(+). In terms of biological role, mRNA decapping enzyme that specifically removes the nicotinamide adenine dinucleotide (NAD) cap from a subset of mRNAs by hydrolyzing the diphosphate linkage to produce nicotinamide mononucleotide (NMN) and 5' monophosphate mRNA. The NAD-cap is present at the 5'-end of some mRNAs and stabilizes RNA against 5'-processing. Has preference for mRNAs with a 5'-end purine. Catalyzes the hydrolysis of a broad range of dinucleotide pyrophosphates. This chain is NAD-capped RNA hydrolase NudC, found in Yersinia pestis bv. Antiqua (strain Antiqua).